We begin with the raw amino-acid sequence, 94 residues long: ESAT-6-like protein EsxI (94 aa).

This sequence belongs to the WXG100 family. ESAT-6 subfamily.

The protein resides in the secreted. This Mycobacterium tuberculosis (strain ATCC 25618 / H37Rv) protein is ESAT-6-like protein EsxI.